The following is a 298-amino-acid chain: Probable endonuclease 4 (298 aa).

Zn(2+) contacts are provided by histidine 69, histidine 110, glutamate 145, aspartate 179, histidine 182, histidine 214, aspartate 227, histidine 229, and glutamate 259.

The protein belongs to the AP endonuclease 2 family. The cofactor is Zn(2+).

It catalyses the reaction Endonucleolytic cleavage to 5'-phosphooligonucleotide end-products.. In terms of biological role, endonuclease IV plays a role in DNA repair. It cleaves phosphodiester bonds at apurinic or apyrimidinic (AP) sites, generating a 3'-hydroxyl group and a 5'-terminal sugar phosphate. The protein is Probable endonuclease 4 of Geobacillus sp. (strain WCH70).